A 472-amino-acid chain; its full sequence is Nuclear receptor subfamily 0 group B member 1 (472 aa).

Repeat copies occupy residues 1–67, 68–135, and 136–202. The tract at residues 1-255 is 4 X 67 AA tandem repeats; that stretch reads MAGEDHPWHG…RPIALKDPQV (255 aa). Short sequence motifs (LXXLL motif) lie at residues 13-17, 80-84, and 148-152; these read LYNLL, LYSML, and LYSLL. An NR LBD domain is found at 190–471; that stretch reads QSTQAMAFLY…DMMLEMLCAK (282 aa). One copy of the 4; truncated repeat lies at 203-255; sequence VCCEEQPQQSSVASDTPVRADQTPAAPQEQPRAPWWDTSSGVQRPIALKDPQV. 2 disordered regions span residues 214–237 and 326–345; these read VASD…RAPW and RRQE…EQPQ. Residues 463–468 carry the AF-2 motif motif; it reads MMLEML.

The protein belongs to the nuclear hormone receptor family. NR0 subfamily. As to quaternary structure, homodimer. Interacts with NR5A1, NR5A2, NR0B2 and with COPS2. Interacts with ESRRB; represses ESRRB activity at the GATA6 promoter.

Its subcellular location is the nucleus. The protein localises to the cytoplasm. Nuclear receptor that lacks a DNA-binding domain and acts as a corepressor that inhibits the transcriptional activity of other nuclear receptors through heterodimeric interactions. Component of a cascade required for the development of the hypothalamic-pituitary-adrenal-gonadal axis. May also have a role in the development of the embryo and in the maintenance of embryonic stem cell pluripotency. In Rattus norvegicus (Rat), this protein is Nuclear receptor subfamily 0 group B member 1 (Nr0b1).